The primary structure comprises 60 residues: MKISALVMITLLICSMMILCQGQKILSNRCNNSSECIPHCIRIFGTRAAKCINRKCYCYP.

Positions 1 to 22 (MKISALVMITLLICSMMILCQG) are cleaved as a signal peptide. Disulfide bonds link cysteine 30-cysteine 51, cysteine 36-cysteine 56, and cysteine 40-cysteine 58.

This sequence belongs to the short scorpion toxin superfamily. Potassium channel inhibitor family. Expressed by the venom gland.

It localises to the secreted. Functionally, weakly inhibits Kv11.1/KCNH2/ERG1, Kv1.2/KCNA2 and Kv1.3/KCNA3 voltage-gated potassium channels. In Buthus israelis (Israeli scorpion), this protein is Potassium channel toxin-like Tx677.